Here is a 195-residue protein sequence, read N- to C-terminus: Holliday junction branch migration complex subunit RuvA (195 aa).

A domain I region spans residues methionine 1–valine 63. The interval aspartate 64–valine 142 is domain II. A flexible linker region spans residues glycine 143 to proline 150. Positions proline 150–lysine 195 are domain III.

It belongs to the RuvA family. In terms of assembly, homotetramer. Forms an RuvA(8)-RuvB(12)-Holliday junction (HJ) complex. HJ DNA is sandwiched between 2 RuvA tetramers; dsDNA enters through RuvA and exits via RuvB. An RuvB hexamer assembles on each DNA strand where it exits the tetramer. Each RuvB hexamer is contacted by two RuvA subunits (via domain III) on 2 adjacent RuvB subunits; this complex drives branch migration. In the full resolvosome a probable DNA-RuvA(4)-RuvB(12)-RuvC(2) complex forms which resolves the HJ.

It is found in the cytoplasm. Its function is as follows. The RuvA-RuvB-RuvC complex processes Holliday junction (HJ) DNA during genetic recombination and DNA repair, while the RuvA-RuvB complex plays an important role in the rescue of blocked DNA replication forks via replication fork reversal (RFR). RuvA specifically binds to HJ cruciform DNA, conferring on it an open structure. The RuvB hexamer acts as an ATP-dependent pump, pulling dsDNA into and through the RuvAB complex. HJ branch migration allows RuvC to scan DNA until it finds its consensus sequence, where it cleaves and resolves the cruciform DNA. The protein is Holliday junction branch migration complex subunit RuvA of Mycolicibacterium smegmatis (strain ATCC 700084 / mc(2)155) (Mycobacterium smegmatis).